The following is a 354-amino-acid chain: Stearoyl-CoA desaturase (354 aa).

The segment at 1–28 is disordered; it reads MPGHLLQEEMTSSYTTTTTTITEPPSES. The Cytoplasmic segment spans residues 1-67; sequence MPGHLLQEEM…EGPPPKLEYV (67 aa). Residues 8 to 28 are compositionally biased toward low complexity; sequence EEMTSSYTTTTTTITEPPSES. Residues 68–88 traverse the membrane as a helical segment; it reads WRNIILMALLHLGALYGLVLV. A substrate-binding site is contributed by asparagine 70. The Lumenal segment spans residues 89-92; the sequence is PSSK. A helical membrane pass occupies residues 93-113; the sequence is VYTLLWAFVYYVISIEGIGAG. Topologically, residues 114 to 212 are cytoplasmic; it reads VHRLWSHRTY…EKLVMFQRRY (99 aa). Fe cation-binding residues include histidine 115 and histidine 120. The Histidine box-1 signature appears at 115–120; the sequence is HRLWSH. Substrate contacts are provided by asparagine 143, arginine 150, and aspartate 151. Fe cation-binding residues include histidine 152, histidine 155, and histidine 156. The Histidine box-2 motif lies at 152–156; it reads HRAHH. Substrate-binding residues include arginine 183 and lysine 184. Residue serine 198 is modified to Phosphoserine. A helical transmembrane segment spans residues 213–232; sequence YKPAILLMCFILPTFVPWYF. Topologically, residues 233–236 are lumenal; sequence WGEA. A helical membrane pass occupies residues 237–258; that stretch reads FVNSLCVSTFLRYTLVLNATWL. Substrate is bound at residue tryptophan 257. Over 259–354 the chain is Cytoplasmic; sequence VNSAAHLYGY…RTGDGSCKSG (96 aa). The Fe cation site is built by histidine 264, histidine 293, histidine 296, and histidine 297. A Histidine box-3 motif is present at residues 293 to 297; it reads HNYHH.

Belongs to the fatty acid desaturase type 1 family. Requires Fe(2+) as cofactor.

The protein resides in the endoplasmic reticulum membrane. It catalyses the reaction octadecanoyl-CoA + 2 Fe(II)-[cytochrome b5] + O2 + 2 H(+) = (9Z)-octadecenoyl-CoA + 2 Fe(III)-[cytochrome b5] + 2 H2O. The enzyme catalyses hexadecanoyl-CoA + 2 Fe(II)-[cytochrome b5] + O2 + 2 H(+) = (9Z)-hexadecenoyl-CoA + 2 Fe(III)-[cytochrome b5] + 2 H2O. Stearoyl-CoA desaturase that utilizes O(2) and electrons from reduced cytochrome b5 to introduce the first double bond into saturated fatty acyl-CoA substrates. Catalyzes the insertion of a cis double bond at the delta-9 position into fatty acyl-CoA substrates including palmitoyl-CoA and stearoyl-CoA. Gives rise to a mixture of 16:1 and 18:1 unsaturated fatty acids. Plays an important role in lipid biosynthesis. Plays an important role in regulating the expression of genes that are involved in lipogenesis and in regulating mitochondrial fatty acid oxidation. Plays an important role in body energy homeostasis. Contributes to the biosynthesis of membrane phospholipids, cholesterol esters and triglycerides. The protein is Stearoyl-CoA desaturase (SCD) of Mesocricetus auratus (Golden hamster).